Reading from the N-terminus, the 372-residue chain is Ligninase LG3 (372 aa).

The first 21 residues, 1–21 (MAFKQLFAAISLALSLSAANA), serve as a signal peptide directing secretion. Positions 22-28 (AAVIEKR) are excised as a propeptide. 2 cysteine pairs are disulfide-bonded: C31-C43 and C62-C148. Catalysis depends on H75, which acts as the Proton acceptor. Ca(2+)-binding residues include D76, G94, D96, and S98. Residue H204 coordinates heme b. Residues S205, D222, T224, I227, and D229 each coordinate Ca(2+). A disulfide bond links C277 and C345. The N-linked (GlcNAc...) asparagine glycan is linked to N285. Over residues 350 to 361 (FPTLTTLPGPET) the composition is skewed to low complexity. The segment at 350 to 372 (FPTLTTLPGPETSVQRIPPPPGA) is disordered.

Belongs to the peroxidase family. Ligninase subfamily. Heme b is required as a cofactor. It depends on Ca(2+) as a cofactor.

The catalysed reaction is 1-(3,4-dimethoxyphenyl)-2-(2-methoxyphenoxy)propane-1,3-diol + H2O2 = 3,4-dimethoxybenzaldehyde + guaiacol + glycolaldehyde + H2O. It carries out the reaction 2 (3,4-dimethoxyphenyl)methanol + H2O2 = 2 (3,4-dimethoxyphenyl)methanol radical + 2 H2O. Its pathway is secondary metabolite metabolism; lignin degradation. Its function is as follows. Depolymerization of lignin. Catalyzes the C(alpha)-C(beta) cleavage of the propyl side chains of lignin. This is Ligninase LG3 (GLG3) from Phanerodontia chrysosporium (White-rot fungus).